Reading from the N-terminus, the 140-residue chain is MNPRTILAFDFGTRSIGCAIGQELTGSARPLQSFKANDGVPDWQQIEKVLREWQPDLVVVGLPLNMDGSEQPLTQQARKFANRLHGRFGVQIALQDERLSTVEARAHLFAGGGYRALEKGRVDAASAALILESWFENQYR.

Belongs to the YqgF nuclease family.

The protein resides in the cytoplasm. Functionally, could be a nuclease involved in processing of the 5'-end of pre-16S rRNA. This is Putative pre-16S rRNA nuclease from Edwardsiella ictaluri (strain 93-146).